Consider the following 436-residue polypeptide: DNA-dependent metalloprotease SPRTN (436 aa).

The 168-residue stretch at 19-186 folds into the SprT-like domain; that stretch reads IRALFLEFND…RTCGGEFVKI (168 aa). Residue His85 coordinates Zn(2+). Residue Glu86 is part of the active site. Zn(2+)-binding residues include His89 and His104. The segment at 184 to 219 is disordered; that stretch reads VKIKEPENYSQKRKRNNDPTKSELGNSSHVKINKGK. The SHP-box motif lies at 231-239; the sequence is FSGTGYKLF. The PIP-box signature appears at 271-277; it reads QTDSTFL. Positions 300–321 are disordered; sequence GSPIKLPSSSNNKSHQDSSKQK. A UBZ4-type zinc finger spans residues 408–435; sequence KVCCPVCGTEIFESKINDHLDTCLQNYN. Residues Cys411, Cys414, His426, and Cys430 each coordinate Zn(2+).

The protein belongs to the Spartan family. In terms of assembly, homodimer. Zn(2+) serves as cofactor. In terms of processing, autocatalytically cleaved in response to double-stranded DNA-binding: autocatalytic cleavage takes place in trans and leads to inactivation.

The protein resides in the nucleus. The protein localises to the chromosome. Its activity is regulated as follows. DNA-binding activates the protease activity: single-stranded DNA-binding specifically activates ability to cleave covalent DNA-protein cross-links (DPCs). In contrast, double-stranded DNA-binding specifically activates autocatalytic cleavage, and subsequent inactivation. Functionally, DNA-dependent metalloendopeptidase that mediates the proteolytic cleavage of covalent DNA-protein cross-links (DPCs) during DNA synthesis, thereby playing a key role in maintaining genomic integrity. DPCs are highly toxic DNA lesions that interfere with essential chromatin transactions, such as replication and transcription, and which are induced by reactive agents, such as UV light or formaldehyde. Associates with the DNA replication machinery and specifically removes DPCs during DNA synthesis. Catalyzes proteolytic cleavage of the hmces DNA-protein cross-link following unfolding by the brip1/fancj helicase. Acts as a pleiotropic protease for DNA-binding proteins cross-linked with DNA, such as top1, top2a, histones H3 and H4. Mediates degradation of DPCs that are not ubiquitinated, while it is not able to degrade ubiquitinated DPCs. SPRTN activation requires polymerase collision with DPCs followed by helicase bypass of DPCs. May also act as a 'reader' of ubiquitinated pcna: facilitates chromatin association of rad18 and is required for efficient pcna monoubiquitination, promoting a feed-forward loop to enhance pcna ubiquitination and translesion DNA synthesis. Acts as a regulator of translesion DNA synthesis by recruiting vcp/p97 to sites of DNA damage. This is DNA-dependent metalloprotease SPRTN from Xenopus tropicalis (Western clawed frog).